Consider the following 111-residue polypeptide: Small ribosomal subunit protein bS16 (111 aa).

The disordered stretch occupies residues 92–111; that stretch reads EKGVKESNEIVEPEGEEVKE. Over residues 100–111 the composition is skewed to acidic residues; it reads EIVEPEGEEVKE.

The protein belongs to the bacterial ribosomal protein bS16 family.

In Petrotoga mobilis (strain DSM 10674 / SJ95), this protein is Small ribosomal subunit protein bS16.